The following is a 274-amino-acid chain: Large ribosomal subunit protein uL2 (274 aa).

The disordered stretch occupies residues 221-274 (RGTAMNPVDHPHGGGEGRNFGKHPVTPWGVQTKGKKTRNNKRTDKSIVRRRSKK).

This sequence belongs to the universal ribosomal protein uL2 family. As to quaternary structure, part of the 50S ribosomal subunit. Forms a bridge to the 30S subunit in the 70S ribosome.

Functionally, one of the primary rRNA binding proteins. Required for association of the 30S and 50S subunits to form the 70S ribosome, for tRNA binding and peptide bond formation. It has been suggested to have peptidyltransferase activity; this is somewhat controversial. Makes several contacts with the 16S rRNA in the 70S ribosome. This Hamiltonella defensa subsp. Acyrthosiphon pisum (strain 5AT) protein is Large ribosomal subunit protein uL2.